Reading from the N-terminus, the 62-residue chain is Mu-elapitoxin-Na1a (62 aa).

Disulfide bonds link C3-C22, C15-C40, C44-C55, and C56-C61.

The protein belongs to the three-finger toxin family. Short-chain subfamily. Orphan group XV sub-subfamily. Expressed by the venom gland.

The protein localises to the secreted. Potent inhibitor of human Nav1.8/SCN10A (IC(50)=141-380 nM). Is highly selective for this channel and acts in a reversible manner. Shows a depolarizing shift of activation and hyperpolarizing shift of inactivation. In contrast to the very similar cytotoxin A5 (AC P62375), does not seem to bind integrin alpha-V/beta-3, since it does not promote or inhibit the proliferation of HUVECs and C-PAE cells. In vivo, in rodent models of inflammatory and neuropathic pain, it alleviates nociceptive behaviors more potently than does morphine. It displays no evident cytotoxic, hemolytic and cardiotoxic activities and produces no obvious adverse responses in mice even at a dose 30-fold higher than that producing a significant analgesic effect. This chain is Mu-elapitoxin-Na1a, found in Naja atra (Chinese cobra).